Consider the following 267-residue polypeptide: Hydroxyethylthiazole kinase (267 aa).

Met-49 provides a ligand contact to substrate. Residues Arg-124 and Thr-170 each contribute to the ATP site. Gly-197 contacts substrate.

The protein belongs to the Thz kinase family. It depends on Mg(2+) as a cofactor.

The enzyme catalyses 5-(2-hydroxyethyl)-4-methylthiazole + ATP = 4-methyl-5-(2-phosphooxyethyl)-thiazole + ADP + H(+). It functions in the pathway cofactor biosynthesis; thiamine diphosphate biosynthesis; 4-methyl-5-(2-phosphoethyl)-thiazole from 5-(2-hydroxyethyl)-4-methylthiazole: step 1/1. In terms of biological role, catalyzes the phosphorylation of the hydroxyl group of 4-methyl-5-beta-hydroxyethylthiazole (THZ). The polypeptide is Hydroxyethylthiazole kinase (Tolumonas auensis (strain DSM 9187 / NBRC 110442 / TA 4)).